A 669-amino-acid polypeptide reads, in one-letter code: DNA ligase (669 aa).

NAD(+)-binding positions include 32-36, 81-82, and Glu-113; these read DAEYD and SL. Lys-115 (N6-AMP-lysine intermediate) is an active-site residue. NAD(+) is bound by residues Arg-136, Glu-173, Lys-290, and Lys-314. Zn(2+)-binding residues include Cys-408, Cys-411, Cys-426, and Cys-432. The BRCT domain maps to 592–669; the sequence is AVDSALAGKI…DEQALIEFLK (78 aa).

It belongs to the NAD-dependent DNA ligase family. LigA subfamily. It depends on Mg(2+) as a cofactor. The cofactor is Mn(2+).

The catalysed reaction is NAD(+) + (deoxyribonucleotide)n-3'-hydroxyl + 5'-phospho-(deoxyribonucleotide)m = (deoxyribonucleotide)n+m + AMP + beta-nicotinamide D-nucleotide.. DNA ligase that catalyzes the formation of phosphodiester linkages between 5'-phosphoryl and 3'-hydroxyl groups in double-stranded DNA using NAD as a coenzyme and as the energy source for the reaction. It is essential for DNA replication and repair of damaged DNA. This is DNA ligase from Vibrio cholerae serotype O1 (strain ATCC 39315 / El Tor Inaba N16961).